Reading from the N-terminus, the 476-residue chain is Serine/threonine-protein kinase Chk1 (476 aa).

An interaction with CLSPN region spans residues 1–265; the sequence is MAVPFVEDWD…IPDIKKDRWY (265 aa). Residues 9-265 enclose the Protein kinase domain; that stretch reads WDLVQTLGEG…IPDIKKDRWY (257 aa). Residues 15–23 and K38 contribute to the ATP site; that span reads LGEGAYGEV. D130 serves as the catalytic Proton acceptor. K132 is covalently cross-linked (Glycyl lysine isopeptide (Lys-Gly) (interchain with G-Cter in ubiquitin)). The tract at residues 267–329 is disordered; sequence KPLNRGAKRP…EPRTGLSLWD (63 aa). S280 carries the post-translational modification Phosphoserine; by PKB/AKT1. Low complexity predominate over residues 280–291; that stretch reads SGGMSESSSGFS. 3 positions are modified to phosphoserine: S286, S296, and S301. Polar residues predominate over residues 298-320; that stretch reads LDFSPINSGSSEENVKFSSSQPE. S317 and S345 each carry phosphoserine; by ATM and ATR. The autoinhibitory region stretch occupies residues 391 to 476; that stretch reads QCLKETFEKL…SSQKVWFPVT (86 aa). Residue K436 forms a Glycyl lysine isopeptide (Lys-Gly) (interchain with G-Cter in ubiquitin) linkage. Phosphoserine is present on residues S463, S467, and S468.

It belongs to the protein kinase superfamily. CAMK Ser/Thr protein kinase family. NIM1 subfamily. Interacts (phosphorylated by ATR) with RAD51. Interacts with and phosphorylates CLSPN, an adapter protein that regulates the ATR-dependent phosphorylation of CHEK1. Interacts with BRCA1. Interacts with and phosphorylates CDC25A, CDC25B and CDC25C. Interacts with FBXO6, which regulates CHEK1. Interacts with PPM1D, which regulates CHEK1 through dephosphorylation. Interacts with TIMELESS; DNA damage-dependent. Interacts with FEM1B; activates CHEK1 in response to stress. Interacts with TLK1. Interacts with XPO1 and YWHAZ. Interacts with CDK5RAP3; antagonizes CHEK1. Post-translationally, phosphorylated by ATR in a RAD17-dependent manner in response to ultraviolet irradiation and inhibition of DNA replication. Phosphorylated by ATM in response to ionizing irradiation. ATM and ATR can both phosphorylate Ser-317 and Ser-345 and this results in enhanced kinase activity. Phosphorylation at Ser-345 induces a change in the conformation of the protein, activates the kinase activity and is a prerequisite for interaction with FBXO6 and subsequent ubiquitination at Lys-436. Phosphorylation at Ser-345 also increases binding to 14-3-3 proteins and promotes nuclear retention. Conversely, dephosphorylation at Ser-345 by PPM1D may contribute to exit from checkpoint mediated cell cycle arrest. Phosphorylation at Ser-280 by AKT1/PKB, may promote mono and/or diubiquitination. Also phosphorylated at undefined residues during mitotic arrest, resulting in decreased activity. Ubiquitinated. Mono or diubiquitination promotes nuclear exclusion. The activated form (phosphorylated on Ser-345) is polyubiquitinated at Lys-436 by some SCF-type E3 ubiquitin ligase complex containing FBXO6 promoting its degradation. Ubiquitination and degradation are required to terminate the checkpoint and ensure that activated CHEK1 does not accumulate as cells progress through S phase, when replication forks encounter transient impediments during normal DNA replication. 'Lys-63'-mediated ubiquitination by TRAF4 at Lys-132 activates cell cycle arrest and activation of DNA repair. In terms of processing, proteolytically cleaved at the C-terminus by SPRTN during normal DNA replication, thereby promoting CHEK1 removal from chromatin and activating the protein kinase activity. As to expression, expressed in brain, heart, liver, lung, skeletal muscle, spleen and testis. Expressed only in liver.

The protein localises to the nucleus. It is found in the chromosome. It localises to the cytoplasm. Its subcellular location is the cytoskeleton. The protein resides in the microtubule organizing center. The protein localises to the centrosome. The enzyme catalyses L-seryl-[protein] + ATP = O-phospho-L-seryl-[protein] + ADP + H(+). It carries out the reaction L-threonyl-[protein] + ATP = O-phospho-L-threonyl-[protein] + ADP + H(+). Its activity is regulated as follows. Activated through phosphorylation predominantly by ATR but also by ATM in response to DNA damage or inhibition of DNA replication. Activation is modulated by several mediators including CLSPN, BRCA1 and FEM1B. Proteolytic cleavage at the C-terminus by SPRTN during normal DNA replication activates the protein kinase activity. Functionally, serine/threonine-protein kinase which is required for checkpoint-mediated cell cycle arrest and activation of DNA repair in response to the presence of DNA damage or unreplicated DNA. May also negatively regulate cell cycle progression during unperturbed cell cycles. This regulation is achieved by a number of mechanisms that together help to preserve the integrity of the genome. Recognizes the substrate consensus sequence [R-X-X-S/T]. Binds to and phosphorylates CDC25A, CDC25B and CDC25C. Phosphorylation of CDC25A at 'Ser-178' and 'Thr-507' and phosphorylation of CDC25C at 'Ser-216' creates binding sites for 14-3-3 proteins which inhibit CDC25A and CDC25C. Phosphorylation of CDC25A at 'Ser-76', 'Ser-124', 'Ser-178', 'Ser-279' and 'Ser-293' promotes proteolysis of CDC25A. Phosphorylation of CDC25A at 'Ser-76' primes the protein for subsequent phosphorylation at 'Ser-79', 'Ser-82' and 'Ser-88' by NEK11, which is required for polyubiquitination and degradation of CDCD25A. Inhibition of CDC25 leads to increased inhibitory tyrosine phosphorylation of CDK-cyclin complexes and blocks cell cycle progression. Also phosphorylates NEK6. Binds to and phosphorylates RAD51 at 'Thr-309', which promotes the release of RAD51 from BRCA2 and enhances the association of RAD51 with chromatin, thereby promoting DNA repair by homologous recombination. Phosphorylates multiple sites within the C-terminus of TP53, which promotes activation of TP53 by acetylation and promotes cell cycle arrest and suppression of cellular proliferation. Also promotes repair of DNA cross-links through phosphorylation of FANCE. Binds to and phosphorylates TLK1 at 'Ser-743', which prevents the TLK1-dependent phosphorylation of the chromatin assembly factor ASF1A. This may enhance chromatin assembly both in the presence or absence of DNA damage. May also play a role in replication fork maintenance through regulation of PCNA. May regulate the transcription of genes that regulate cell-cycle progression through the phosphorylation of histones. Phosphorylates histone H3.1 (to form H3T11ph), which leads to epigenetic inhibition of a subset of genes. May also phosphorylate RB1 to promote its interaction with the E2F family of transcription factors and subsequent cell cycle arrest. Phosphorylates SPRTN, promoting SPRTN recruitment to chromatin. Reduces replication stress and activates the G2/M checkpoint, by phosphorylating and inactivating PABIR1/FAM122A and promoting the serine/threonine-protein phosphatase 2A-mediated dephosphorylation and stabilization of WEE1 levels and activity. This chain is Serine/threonine-protein kinase Chk1 (Chek1), found in Rattus norvegicus (Rat).